The sequence spans 116 residues: uncharacterized protein (116 aa).

Residues 52–72 (VFCSANSVPLYLLLLTSALHF) form a helical membrane-spanning segment.

It is found in the mitochondrion membrane. This is an uncharacterized protein from Arabidopsis thaliana (Mouse-ear cress).